Here is a 330-residue protein sequence, read N- to C-terminus: Methionyl-tRNA formyltransferase (330 aa).

116–119 (SLLP) is a binding site for (6S)-5,6,7,8-tetrahydrofolate.

Belongs to the Fmt family.

It carries out the reaction L-methionyl-tRNA(fMet) + (6R)-10-formyltetrahydrofolate = N-formyl-L-methionyl-tRNA(fMet) + (6S)-5,6,7,8-tetrahydrofolate + H(+). In terms of biological role, attaches a formyl group to the free amino group of methionyl-tRNA(fMet). The formyl group appears to play a dual role in the initiator identity of N-formylmethionyl-tRNA by promoting its recognition by IF2 and preventing the misappropriation of this tRNA by the elongation apparatus. This is Methionyl-tRNA formyltransferase from Nitratidesulfovibrio vulgaris (strain DP4) (Desulfovibrio vulgaris).